The chain runs to 449 residues: Plasmepsin IV (449 aa).

Topologically, residues Met1 to Lys37 are cytoplasmic. Positions Met1–Gly121 are excised as a propeptide. The chain crosses the membrane as a helical; Signal-anchor for type II membrane protein span at residues Leu38–Ile58. Over Gly59–Leu449 the chain is Lumenal. In terms of domain architecture, Peptidase A1 spans Phe137–Ala444. The active site involves Asp155. Residues Cys168 and Cys173 are joined by a disulfide bond. Asp335 is an active-site residue. Cys370 and Cys406 form a disulfide bridge.

The protein belongs to the peptidase A1 family. As to quaternary structure, component of the hemozoin formation complex (HFC) composed of falcipains FP2A and/or FP2B, plasmepsins PMII, PMIII/HAP and PMIV, heme detoxifying protein HDP and falcilysin FLN. The HFC complex is involved in hemoglobin degradation and detoxification of heme in the food vacuole during the asexual blood stage. In terms of processing, proteolytically cleaved into the soluble active mature form by cysteine proteases in the digestive vacuole of trophozoites. Proteolysis requires an acidic environment. Autoprocessing or transprocessing by other plasmepsins such as PMII may serve as an alternate activation system.

Its subcellular location is the membrane. It localises to the vacuole lumen. It catalyses the reaction Hydrolysis of the bonds linking certain hydrophobic residues in hemoglobin or globin. Also cleaves small molecules substrates such as Ala-Leu-Glu-Arg-Thr-Phe-|-Phe(NO2)-Ser-Phe-Pro-Thr.. Inhibited by pepstatin A. Its function is as follows. During the asexual blood stage, catalyzes the cleavage of denatured host hemoglobin (Hb) or globins. Digestion of host Hb is an essential step which provides the parasite with amino acids for protein synthesis, and regulates osmolarity. This is Plasmepsin IV from Plasmodium falciparum (isolate HB3).